A 332-amino-acid chain; its full sequence is L-lactate dehydrogenase A chain (332 aa).

Residues 29–57 and R99 each bind NAD(+); that span reads GAVGMACAISILMKDLADELALVDVIEDK. Substrate-binding residues include R106, N138, and R169. N138 lines the NAD(+) pocket. H193 (proton acceptor) is an active-site residue. T248 contacts substrate.

The protein belongs to the LDH/MDH superfamily. LDH family. Homotetramer.

It localises to the cytoplasm. The enzyme catalyses (S)-lactate + NAD(+) = pyruvate + NADH + H(+). It participates in fermentation; pyruvate fermentation to lactate; (S)-lactate from pyruvate: step 1/1. Interconverts simultaneously and stereospecifically pyruvate and lactate with concomitant interconversion of NADH and NAD(+). The polypeptide is L-lactate dehydrogenase A chain (LDHA) (Pelodiscus sinensis japonicus (Chinese soft-shelled turtle)).